We begin with the raw amino-acid sequence, 257 residues long: Phosphonates import ATP-binding protein PhnC (257 aa).

Positions 2 to 246 constitute an ABC transporter domain; it reads IEFRNVSKVY…KFAEIYGDVV (245 aa). 35–42 contributes to the ATP binding site; that stretch reads GLSGAGKS.

It belongs to the ABC transporter superfamily. Phosphonates importer (TC 3.A.1.9.1) family. As to quaternary structure, the complex is composed of two ATP-binding proteins (PhnC), two transmembrane proteins (PhnE) and a solute-binding protein (PhnD).

The protein resides in the cell membrane. The enzyme catalyses phosphonate(out) + ATP + H2O = phosphonate(in) + ADP + phosphate + H(+). Part of the ABC transporter complex PhnCDE involved in phosphonates import. Responsible for energy coupling to the transport system. This Bacillus anthracis protein is Phosphonates import ATP-binding protein PhnC.